The sequence spans 124 residues: Phosphoribosyl-AMP cyclohydrolase (124 aa).

Aspartate 82 is a Mg(2+) binding site. Cysteine 83 lines the Zn(2+) pocket. Residues aspartate 84 and aspartate 86 each contribute to the Mg(2+) site. Cysteine 99 and cysteine 106 together coordinate Zn(2+).

Belongs to the PRA-CH family. As to quaternary structure, homodimer. Mg(2+) serves as cofactor. Requires Zn(2+) as cofactor.

It is found in the cytoplasm. The catalysed reaction is 1-(5-phospho-beta-D-ribosyl)-5'-AMP + H2O = 1-(5-phospho-beta-D-ribosyl)-5-[(5-phospho-beta-D-ribosylamino)methylideneamino]imidazole-4-carboxamide. Its pathway is amino-acid biosynthesis; L-histidine biosynthesis; L-histidine from 5-phospho-alpha-D-ribose 1-diphosphate: step 3/9. Its function is as follows. Catalyzes the hydrolysis of the adenine ring of phosphoribosyl-AMP. The chain is Phosphoribosyl-AMP cyclohydrolase from Zymomonas mobilis subsp. mobilis (strain ATCC 31821 / ZM4 / CP4).